Reading from the N-terminus, the 118-residue chain is REPTOR-binding partner (118 aa).

Residues 1–20 are compositionally biased toward polar residues; sequence MADMEIQSNKMSITEETQVQ. The segment at 1–53 is disordered; sequence MADMEIQSNKMSITEETQVQTRKECGKRGRKPGRKTSTEKLDMKAKLERSRQS. Residues 36–53 show a composition bias toward basic and acidic residues; that stretch reads TSTEKLDMKAKLERSRQS. The interval 40–77 is basic motif; the sequence is KLDMKAKLERSRQSARECRARKKLRYQYLEELVADREK. The bZIP domain maps to 40–90; sequence KLDMKAKLERSRQSARECRARKKLRYQYLEELVADREKAVVALRTELERLI. Residues 82–89 form a leucine-zipper region; it reads LRTELERL.

This sequence belongs to the bZIP family. ATF subfamily. In terms of assembly, homodimer. Interacts (via C-terminus) with REPTOR (via C-terminus).

It is found in the nucleus. The protein localises to the chromosome. Functionally, transcriptional regulator that acts in the TORC1 signaling pathway to regulate energy homeostasis and promote survival during nutrient deprivation. Interacts with REPTOR to form a transcriptional activator complex that functions downstream of TORC1 to up-regulate the expression of most target genes induced by TORC1 inhibition. In the complex, acts to enhance the binding of the transcriptional activator REPTOR to the regulatory sequences of target genes. Under normal conditions TORC1 is active, inhibiting the formation of the REPTOR/REPTOR-BP complex by phosphorylating REPTOR and mediates its cytoplasmic retention by forming a docking site for 14-3-3 proteins. Upon TORC1 inhibition resulting from nutrient stress, REPTOR is recruited into the nucleus where it interacts with REPTOR-BP and together they maintain organismal metabolism by activating the expression of target stress response genes including those involved in glycogenesis and triglyceride biosynthesis. The complex also appears to negatively regulate some aspects of TORC1-dependent larval growth. The chain is REPTOR-binding partner from Drosophila melanogaster (Fruit fly).